Reading from the N-terminus, the 212-residue chain is Pyridoxine/pyridoxamine 5'-phosphate oxidase (212 aa).

Residues Arg-9–Tyr-12 and Lys-67 contribute to the substrate site. Residues Arg-62–Lys-67, Phe-77–Thr-78, Arg-83, and Lys-84 each bind FMN. Substrate contacts are provided by Tyr-124, Arg-128, and Ser-132. FMN contacts are provided by residues Gln-141–Ser-142 and Trp-185. Arg-191–His-193 is a binding site for substrate. Residue Arg-195 participates in FMN binding.

It belongs to the pyridoxamine 5'-phosphate oxidase family. In terms of assembly, homodimer. It depends on FMN as a cofactor.

It carries out the reaction pyridoxamine 5'-phosphate + O2 + H2O = pyridoxal 5'-phosphate + H2O2 + NH4(+). The enzyme catalyses pyridoxine 5'-phosphate + O2 = pyridoxal 5'-phosphate + H2O2. It participates in cofactor metabolism; pyridoxal 5'-phosphate salvage; pyridoxal 5'-phosphate from pyridoxamine 5'-phosphate: step 1/1. Its pathway is cofactor metabolism; pyridoxal 5'-phosphate salvage; pyridoxal 5'-phosphate from pyridoxine 5'-phosphate: step 1/1. Catalyzes the oxidation of either pyridoxine 5'-phosphate (PNP) or pyridoxamine 5'-phosphate (PMP) into pyridoxal 5'-phosphate (PLP). This is Pyridoxine/pyridoxamine 5'-phosphate oxidase from Verminephrobacter eiseniae (strain EF01-2).